A 415-amino-acid chain; its full sequence is Neuromedin-U receptor 2 (415 aa).

Residues 1–49 (MSGMEKLQNASWIYQQKLEDPFQKHLNSTEEYLAFLCGPRRSHFFLPVS) are Extracellular-facing. 2 N-linked (GlcNAc...) asparagine glycosylation sites follow: asparagine 9 and asparagine 27. Residues 50-70 (VVYVPIFVVGVIGNVLVCLVI) form a helical membrane-spanning segment. The Cytoplasmic portion of the chain corresponds to 71–82 (LQHQAMKTPTNY). The helical transmembrane segment at 83 to 103 (YLFSLAVSDLLVLLLGMPLEV) threads the bilayer. Over 104–123 (YEMWRNYPFLFGPVGCYFKT) the chain is Extracellular. A disulfide bridge connects residues cysteine 119 and cysteine 204. Residues 124–146 (ALFETVCFASILSITTVSVERYV) traverse the membrane as a helical segment. Topologically, residues 147–165 (AILHPFRAKLQSTRRRALR) are cytoplasmic. Residues 166-186 (ILGIVWGFSVLFSLPNTSIHG) traverse the membrane as a helical segment. The Extracellular segment spans residues 187–214 (IKFHYFPNGSLVPGSATCTVIKPMWIYN). A glycan (N-linked (GlcNAc...) asparagine) is linked at asparagine 194. Residues 215–235 (FIIQVTSFLFYLLPMTVISVL) traverse the membrane as a helical segment. At 236 to 265 (YYLMALRLKKDKSLEADEGNANIQRPCRKS) the chain is on the cytoplasmic side. A helical membrane pass occupies residues 266–286 (VNKMLFVLVLVFAICWAPFHI). Topologically, residues 287–301 (DRLFFSFVEEWSESL) are extracellular. A helical transmembrane segment spans residues 302–322 (AAVFNLVHVVSGVFFYLSSAV). The Cytoplasmic portion of the chain corresponds to 323-415 (NPIIYNLLSR…NYQSFHFNKT (93 aa)).

It belongs to the G-protein coupled receptor 1 family. Predominantly expressed in the CNS, particularly in the medulla oblongata, pontine reticular formation, spinal cord, and thalamus. High level in testis whereas lower levels are present in a variety of peripheral tissues including the gastrointestinal tract, genitourinary tract, liver, pancreas, adrenal gland, thyroid gland, lung, trachea, spleen and thymus.

It localises to the cell membrane. In terms of biological role, receptor for the neuromedin-U and neuromedin-S neuropeptides. In Homo sapiens (Human), this protein is Neuromedin-U receptor 2 (NMUR2).